The sequence spans 73 residues: Conotoxin reg3a (73 aa).

An N-terminal signal peptide occupies residues 1–20; sequence MMSKLRVLLTICLLLFPLSA. The propeptide occupies 21–55; that stretch reads LPLDGDQPADQPAKRMWNGKLAARKPRFDKYDLVR. 4-hydroxyproline is present on residues P59, P60, P65, and P70. C72 is modified (cysteine amide).

Contains 3 disulfide bonds. Expressed by the venom duct.

It is found in the secreted. This is Conotoxin reg3a from Conus regius (Crown cone).